Here is a 598-residue protein sequence, read N- to C-terminus: Aspartate--tRNA ligase (598 aa).

Glutamate 173 is an L-aspartate binding site. Positions glutamine 197–lysine 200 are aspartate. L-aspartate is bound at residue arginine 219. Residues arginine 219–glutamate 221 and glutamine 228 each bind ATP. An L-aspartate-binding site is contributed by histidine 449. An ATP-binding site is contributed by glutamate 483. Position 490 (arginine 490) interacts with L-aspartate. An ATP-binding site is contributed by glycine 535 to arginine 538.

This sequence belongs to the class-II aminoacyl-tRNA synthetase family. Type 1 subfamily. In terms of assembly, homodimer.

The protein localises to the cytoplasm. The catalysed reaction is tRNA(Asp) + L-aspartate + ATP = L-aspartyl-tRNA(Asp) + AMP + diphosphate. Functionally, catalyzes the attachment of L-aspartate to tRNA(Asp) in a two-step reaction: L-aspartate is first activated by ATP to form Asp-AMP and then transferred to the acceptor end of tRNA(Asp). The protein is Aspartate--tRNA ligase of Shewanella halifaxensis (strain HAW-EB4).